Consider the following 311-residue polypeptide: Ribonuclease HIII (311 aa).

The 217-residue stretch at 95–311 (MSIVGSDEVG…NTEKAFRLLK (217 aa)) folds into the RNase H type-2 domain. 3 residues coordinate a divalent metal cation: aspartate 101, glutamate 102, and aspartate 206.

Belongs to the RNase HII family. RnhC subfamily. Mn(2+) serves as cofactor. Mg(2+) is required as a cofactor.

The protein resides in the cytoplasm. It carries out the reaction Endonucleolytic cleavage to 5'-phosphomonoester.. In terms of biological role, endonuclease that specifically degrades the RNA of RNA-DNA hybrids. The sequence is that of Ribonuclease HIII from Bacillus anthracis (strain A0248).